Here is a 404-residue protein sequence, read N- to C-terminus: MREAPHVLGIVLAGGEGKRLYPLTADRAKPAVPFGGGYRLIDFVLSNLVNARFLRICVLTQYKSHSLDRHISQNWRLSGLAGEYITPVPAQQRLGPRWYTGSADAIYQSMNLIYDEDPDYIVIFGADHVYRMDPEQMVQQHIESGAGATVAGIRVPRAEASAFGCIDSDDSGRIRGFIEKPADPPGTPDDPEQTFVSMGNYIFTTKVLIDAIRADAEDDDSDHDMGGDIIPRLVADGMAAVYDFNDNEVPGATERDHGYWRDVGTLDAFYDAHMDLVSVHPVFNLYNKRWPIRGGAENLAPAKFVNGGSAQESVVGAGSIISAASVRNSVLSSNVVIDDGAIVEGSVIMPGARIGRGAVVRHAILDKNVVVGPGEMVGVDLDKDRERFSISAGGVVAVGKGVWI.

Residues Tyr99, Gly164, 179–180, and Ser197 contribute to the alpha-D-glucose 1-phosphate site; that span reads EK.

It belongs to the bacterial/plant glucose-1-phosphate adenylyltransferase family.

It catalyses the reaction alpha-D-glucose 1-phosphate + ATP + H(+) = ADP-alpha-D-glucose + diphosphate. It participates in glycan biosynthesis; glycogen biosynthesis. Its function is as follows. Involved in the biosynthesis of ADP-glucose, a building block, required in the biosynthesis of maltose-1-phosphate (M1P) and in the elongation reactions to produce linear alpha-1,4-glucans. Catalyzes the reaction between ATP and alpha-D-glucose 1-phosphate (G1P) to produce pyrophosphate and ADP-Glc. This chain is Glucose-1-phosphate adenylyltransferase, found in Mycolicibacterium vanbaalenii (strain DSM 7251 / JCM 13017 / BCRC 16820 / KCTC 9966 / NRRL B-24157 / PYR-1) (Mycobacterium vanbaalenii).